We begin with the raw amino-acid sequence, 346 residues long: Annexin A1 (346 aa).

Residue alanine 2 is modified to N-acetylalanine. A Phosphoserine; by TRPM7 modification is found at serine 5. An Isoglutamyl lysine isopeptide (Gln-Lys) (interchain with K-?) cross-link involves residue glutamine 19. A Phosphotyrosine modification is found at tyrosine 21. Residue serine 27 is modified to Phosphoserine; by PKC. A phosphoserine mark is found at serine 34 and serine 37. Annexin repeat units lie at residues 42-113 (FNVS…AMLK), 114-185 (TPAQ…ALAK), 197-269 (DLAD…TIVK), and 273-344 (STPA…ALCG). Lysine 58 bears the N6-acetyllysine mark. 11 residues coordinate Ca(2+): glycine 59, valine 60, glutamate 62, arginine 97, leucine 100, glutamate 105, methionine 127, glycine 129, glycine 131, threonine 132, and glutamate 134. Threonine 136 is modified (phosphothreonine). Aspartate 171, glycine 210, and arginine 213 together coordinate Ca(2+). A Glycyl lysine isopeptide (Lys-Gly) (interchain with G-Cter in SUMO1); alternate cross-link involves residue lysine 214. A Glycyl lysine isopeptide (Lys-Gly) (interchain with G-Cter in SUMO2); alternate cross-link involves residue lysine 214. Ca(2+) is bound by residues glycine 215, aspartate 253, glutamate 255, and leucine 256. Lysine 257 is covalently cross-linked (Glycyl lysine isopeptide (Lys-Gly) (interchain with G-Cter in SUMO1)). Residues glutamate 261, methionine 286, glycine 288, and glycine 290 each contribute to the Ca(2+) site. Lysine 312 carries the post-translational modification N6-acetyllysine. Cysteine 324 and cysteine 343 are oxidised to a cystine. Leucine 328, glutamate 330, and threonine 331 together coordinate Ca(2+). Residue lysine 332 forms a Glycyl lysine isopeptide (Lys-Gly) (interchain with G-Cter in SUMO1) linkage. Residue glutamate 336 coordinates Ca(2+).

The protein belongs to the annexin family. In terms of assembly, homodimer; non-covalently linked. Homodimer; linked by transglutamylation. Homodimers linked by transglutamylation are observed in placenta, but not in other tissues. Interacts with S100A11. Heterotetramer, formed by two molecules each of S100A11 and ANXA1. Interacts with DYSF. Interacts with EGFR. In terms of processing, phosphorylated by protein kinase C, EGFR and TRPM7. Phosphorylated in response to EGF treatment. Sumoylated. Post-translationally, proteolytically cleaved by cathepsin CTSG to release the active N-terminal peptide Ac2-26. In terms of tissue distribution, detected in lung. Detected at the apical membrane of airway epithelial cells. Detected in intestinal epithelial cells. Detected in skeletal muscle. Detected in prostate. Detected in thymus (at protein level). Detected in stomach, lung, spleen, ovary and uterus, and at lower levels in kidney, thymus and heart.

It is found in the nucleus. It localises to the cytoplasm. The protein localises to the cell projection. Its subcellular location is the cilium. The protein resides in the basolateral cell membrane. It is found in the lateral cell membrane. It localises to the cell membrane. The protein localises to the apical cell membrane. Its subcellular location is the membrane. The protein resides in the early endosome. It is found in the cytoplasmic vesicle membrane. It localises to the endosome membrane. The protein localises to the secreted. Its subcellular location is the extracellular space. The protein resides in the extracellular exosome. It is found in the cytoplasmic vesicle. It localises to the secretory vesicle lumen. The protein localises to the phagocytic cup. Plays important roles in the innate immune response as effector of glucocorticoid-mediated responses and regulator of the inflammatory process. Has anti-inflammatory activity. Plays a role in glucocorticoid-mediated down-regulation of the early phase of the inflammatory response. Contributes to the adaptive immune response by enhancing signaling cascades that are triggered by T-cell activation, regulates differentiation and proliferation of activated T-cells. Promotes the differentiation of T-cells into Th1 cells and negatively regulates differentiation into Th2 cells. Has no effect on unstimulated T-cells. Negatively regulates hormone exocytosis via activation of the formyl peptide receptors and reorganization of the actin cytoskeleton. Has high affinity for Ca(2+) and can bind up to eight Ca(2+) ions. Displays Ca(2+)-dependent binding to phospholipid membranes. Plays a role in the formation of phagocytic cups and phagosomes. Plays a role in phagocytosis by mediating the Ca(2+)-dependent interaction between phagosomes and the actin cytoskeleton. Its function is as follows. Functions at least in part by activating the formyl peptide receptors and downstream signaling cascades. Promotes chemotaxis of granulocytes and monocytes via activation of the formyl peptide receptors. Promotes rearrangement of the actin cytoskeleton, cell polarization and cell migration. Promotes resolution of inflammation and wound healing. Acts via neutrophil N-formyl peptide receptors to enhance the release of CXCL2. The chain is Annexin A1 (Anxa1) from Mus musculus (Mouse).